A 188-amino-acid chain; its full sequence is uncharacterized protein (188 aa).

The first 23 residues, 1–23, serve as a signal peptide directing secretion; sequence MVRPKLAFYILPLLLAFLGSALG. N74 carries an N-linked (GlcNAc...) asparagine glycan.

This is an uncharacterized protein from Mus musculus (Mouse).